Consider the following 1130-residue polypeptide: Putative protein tag-278 (1130 aa).

Disordered stretches follow at residues 1 to 92 (MSRS…DIDN), 104 to 129 (VARE…ELKR), and 974 to 1130 (NELI…AWKF). 2 coiled-coil regions span residues 121–779 (AGRE…EEIK) and 805–1061 (EERE…ARAK). Basic and acidic residues predominate over residues 983 to 993 (RQTDESTSEPH). The segment covering 999–1011 (SITSHGVFQNFVS) has biased composition (polar residues). Composition is skewed to basic and acidic residues over residues 1013–1057 (MKDK…EKSP) and 1068–1081 (RLRD…KSDN). Over residues 1082-1095 (LESTPSSSSRNLLS) the composition is skewed to low complexity. Over residues 1116 to 1130 (TKKDSSSEKRPAWKF) the composition is skewed to basic and acidic residues.

This is Putative protein tag-278 (tag-278) from Caenorhabditis elegans.